Reading from the N-terminus, the 367-residue chain is Regulator of fusion ref-1 (367 aa).

Residues 1–10 (MVLISTPPPA) show a composition bias toward pro residues. The tract at residues 1-24 (MVLISTPPPAYAHNRKTSQEKKRR) is disordered. The interval 11 to 24 (YAHNRKTSQEKKRR) is basic motif 1. Residues 11–63 (YAHNRKTSQEKKRRDEINAKIKELQLLIQNESDNEKMTQGDVLNRAVEVVSRM) enclose the bHLH 1 domain. The helix-loop-helix motif 1 stretch occupies residues 25–63 (DEINAKIKELQLLIQNESDNEKMTQGDVLNRAVEVVSRM). 2 disordered regions span residues 133-177 (RSES…RRDR) and 313-367 (ATSP…RPWE). Residues 141-157 (SSMSYRSQSSSPSTSES) show a composition bias toward low complexity. Basic and acidic residues predominate over residues 161-177 (IDRKEVKKNREQDRRDR). The basic motif 2 stretch occupies residues 162–175 (DRKEVKKNREQDRR). Positions 162-219 (DRKEVKKNREQDRRDRQGEAFDALKNFIIENKLMTSHQVEKMQRLNTLDIIIAYIQNK) constitute a bHLH 2 domain. Positions 176–219 (DRQGEAFDALKNFIIENKLMTSHQVEKMQRLNTLDIIIAYIQNK) are helix-loop-helix motif 2. A compositionally biased stretch (low complexity) spans 313–354 (ATSPKSQQSPSYSLDSPPPSSDTSSSSIETPSTPNENSNSNP). Residues 356–367 (ASRKSKLFRPWE) show a composition bias toward basic residues.

Interacts with unc-37.

Its subcellular location is the nucleus. Its function is as follows. Probable transcription factor. Binds 5'-TGCCACGTGTCCA-3' in vitro, probably via the E-box motif 5'-CA[TC][AG]TG-3'. Acts in embryonic development in a Notch-dependent manner, perhaps as a direct target of transcriptional regulator lag-1 in the Notch signaling pathway. Also acts in embryonic development in a Notch-independent manner. Plays a role in both Notch-dependent and -independent pathways in the execution of neuronal lineage decisions in the embryo. Also involved in regulating cell fate leading to formation of neuronal structures known as postdeirids. Involved in the pattern of cell fusion with a large syncytium known as hyp-7, during larval development, in hermaphrodites. Plays a role in regulating the activity of homeobox protein mab-5 in Pn.p cells. The chain is Regulator of fusion ref-1 from Caenorhabditis elegans.